Here is a 225-residue protein sequence, read N- to C-terminus: Uracil-DNA glycosylase (225 aa).

The active-site Proton acceptor is Asp-68.

It belongs to the uracil-DNA glycosylase (UDG) superfamily. UNG family.

The protein resides in the cytoplasm. The enzyme catalyses Hydrolyzes single-stranded DNA or mismatched double-stranded DNA and polynucleotides, releasing free uracil.. Excises uracil residues from the DNA which can arise as a result of misincorporation of dUMP residues by DNA polymerase or due to deamination of cytosine. The protein is Uracil-DNA glycosylase of Mycolicibacterium gilvum (strain PYR-GCK) (Mycobacterium gilvum (strain PYR-GCK)).